Here is a 545-residue protein sequence, read N- to C-terminus: T-box transcription factor TBX4 (545 aa).

Residues 71–251 (LHEKELWKKF…NNPFAKGFRG (181 aa)) constitute a DNA-binding region (T-box). The tract at residues 479–509 (QSQVRERGPSASFPRERGLPQGCERKPPSPH) is disordered. Basic and acidic residues predominate over residues 482 to 505 (VRERGPSASFPRERGLPQGCERKP). Serine 507 is modified (phosphoserine).

It localises to the nucleus. Transcriptional regulator that has an essential role in the organogenesis of lungs, pelvis, and hindlimbs. The protein is T-box transcription factor TBX4 (TBX4) of Homo sapiens (Human).